The sequence spans 531 residues: Laccase-4 (531 aa).

The N-terminal stretch at 1–19 is a signal peptide; it reads MLSSITLLPLLAAVSTPAF. Plastocyanin-like domains follow at residues 23-146, 158-315, and 384-507; these read RNYK…LVIY, VDDA…LHYE, and SLPT…VSSR. The N-linked (GlcNAc...) asparagine glycan is linked to asparagine 66. Residues histidine 83 and histidine 85 each coordinate Cu cation. A disulfide bridge links cysteine 104 with cysteine 528. A glycan (N-linked (GlcNAc...) asparagine) is linked at asparagine 109. The Cu cation site is built by histidine 128 and histidine 130. N-linked (GlcNAc...) asparagine glycosylation is found at asparagine 186, asparagine 231, asparagine 280, and asparagine 395. Residues histidine 427, histidine 430, histidine 432, histidine 479, cysteine 480, and histidine 481 each contribute to the Cu cation site.

The protein belongs to the multicopper oxidase family. In terms of assembly, homodimer. It depends on Cu cation as a cofactor. In terms of tissue distribution, in mycelia, at a higher level than LCC1, LCC2 and LCC3.

It localises to the secreted. It carries out the reaction 4 hydroquinone + O2 = 4 benzosemiquinone + 2 H2O. Functionally, lignin degradation and detoxification of lignin-derived products. The chain is Laccase-4 (LCC4) from Thanatephorus cucumeris (Black scurf of potato).